The primary structure comprises 158 residues: NADH-quinone oxidoreductase subunit B 1 (158 aa).

[4Fe-4S] cluster is bound by residues C37, C38, C102, and C132.

The protein belongs to the complex I 20 kDa subunit family. NDH-1 is composed of 14 different subunits. Subunits NuoB, C, D, E, F, and G constitute the peripheral sector of the complex. The cofactor is [4Fe-4S] cluster.

Its subcellular location is the cell inner membrane. The enzyme catalyses a quinone + NADH + 5 H(+)(in) = a quinol + NAD(+) + 4 H(+)(out). In terms of biological role, NDH-1 shuttles electrons from NADH, via FMN and iron-sulfur (Fe-S) centers, to quinones in the respiratory chain. Couples the redox reaction to proton translocation (for every two electrons transferred, four hydrogen ions are translocated across the cytoplasmic membrane), and thus conserves the redox energy in a proton gradient. This chain is NADH-quinone oxidoreductase subunit B 1, found in Chromobacterium violaceum (strain ATCC 12472 / DSM 30191 / JCM 1249 / CCUG 213 / NBRC 12614 / NCIMB 9131 / NCTC 9757 / MK).